The following is a 231-amino-acid chain: Lipoprotein-releasing system ATP-binding protein LolD (231 aa).

One can recognise an ABC transporter domain in the interval 6 to 230 (LSCKNVSKKY…DGELELVINS (225 aa)). 42–49 (GLSGSGKT) is an ATP binding site.

Belongs to the ABC transporter superfamily. Lipoprotein translocase (TC 3.A.1.125) family. The complex is composed of two ATP-binding proteins (LolD) and two transmembrane proteins (LolC and LolE).

The protein resides in the cell inner membrane. Its function is as follows. Part of the ABC transporter complex LolCDE involved in the translocation of mature outer membrane-directed lipoproteins, from the inner membrane to the periplasmic chaperone, LolA. Responsible for the formation of the LolA-lipoprotein complex in an ATP-dependent manner. The chain is Lipoprotein-releasing system ATP-binding protein LolD from Francisella tularensis subsp. tularensis (strain FSC 198).